We begin with the raw amino-acid sequence, 453 residues long: tRNA modification GTPase MnmE (453 aa).

(6S)-5-formyl-5,6,7,8-tetrahydrofolate-binding residues include Arg22, Glu79, and Lys119. The region spanning 215 to 376 (GMKVVIAGRP…LKQHLKSLMG (162 aa)) is the TrmE-type G domain. Asn225 is a K(+) binding site. GTP-binding positions include 225 to 230 (NAGKSS), 244 to 250 (TEIAGTT), 269 to 272 (DTAG), and 334 to 337 (NKAD). Residue Ser229 coordinates Mg(2+). K(+) is bound by residues Thr244, Ile246, and Thr249. Mg(2+) is bound at residue Thr250. Lys453 contacts (6S)-5-formyl-5,6,7,8-tetrahydrofolate.

The protein belongs to the TRAFAC class TrmE-Era-EngA-EngB-Septin-like GTPase superfamily. TrmE GTPase family. As to quaternary structure, homodimer. Heterotetramer of two MnmE and two MnmG subunits. Requires K(+) as cofactor.

It localises to the cytoplasm. In terms of biological role, exhibits a very high intrinsic GTPase hydrolysis rate. Involved in the addition of a carboxymethylaminomethyl (cmnm) group at the wobble position (U34) of certain tRNAs, forming tRNA-cmnm(5)s(2)U34. This is tRNA modification GTPase MnmE from Shewanella denitrificans (strain OS217 / ATCC BAA-1090 / DSM 15013).